The chain runs to 197 residues: Protein Hikeshi (197 aa).

A required for F-X-F-G repeats-nucleoporins recognition and nuclear import region spans residues 18–55; it reads VAEDKFVFDLPDYESINHVVVFMLGTIPFPEGMGGSVY. The interval 124–134 is flexible linker region involved in nuclear import of HSP70 proteins; that stretch reads QTPVGNAAVSS.

It belongs to the OPI10 family. Forms an asymmetric homodimer; required for binding and nuclear import of HSP70 proteins. Interacts with ATP-bound HSP70 proteins. Interacts with NUP62 and NUP153 (via F-X-F-G repeats). Interacts with HSPA8.

It localises to the cytoplasm. It is found in the cytosol. Its subcellular location is the nucleus. In terms of biological role, acts as a specific nuclear import carrier for HSP70 proteins following heat-shock stress: acts by mediating the nucleoporin-dependent translocation of ATP-bound HSP70 proteins into the nucleus. HSP70 proteins import is required to protect cells from heat shock damages. Does not translocate ADP-bound HSP70 proteins into the nucleus. The sequence is that of Protein Hikeshi from Homo sapiens (Human).